Reading from the N-terminus, the 257-residue chain is 3-deoxy-manno-octulosonate cytidylyltransferase (257 aa).

The protein belongs to the KdsB family.

The protein resides in the cytoplasm. The catalysed reaction is 3-deoxy-alpha-D-manno-oct-2-ulosonate + CTP = CMP-3-deoxy-beta-D-manno-octulosonate + diphosphate. It functions in the pathway nucleotide-sugar biosynthesis; CMP-3-deoxy-D-manno-octulosonate biosynthesis; CMP-3-deoxy-D-manno-octulosonate from 3-deoxy-D-manno-octulosonate and CTP: step 1/1. Its pathway is bacterial outer membrane biogenesis; lipopolysaccharide biosynthesis. Activates KDO (a required 8-carbon sugar) for incorporation into bacterial lipopolysaccharide in Gram-negative bacteria. This is 3-deoxy-manno-octulosonate cytidylyltransferase from Xylella fastidiosa (strain M23).